Reading from the N-terminus, the 471-residue chain is UTP--glucose-1-phosphate uridylyltransferase (471 aa).

UTP-binding positions include L87 to G90, K101, Q164, and G193. Position 89–90 (G89–G90) interacts with substrate. Substrate contacts are provided by residues H194 and N222–D224. Residues D224 and K362 each coordinate UTP.

It belongs to the UDPGP type 1 family.

Its subcellular location is the cytoplasm. The enzyme catalyses alpha-D-glucose 1-phosphate + UTP + H(+) = UDP-alpha-D-glucose + diphosphate. Functionally, plays a central role as a glucosyl donor in cellular metabolic pathways. This Pyrus pyrifolia (Chinese pear) protein is UTP--glucose-1-phosphate uridylyltransferase.